The following is a 447-amino-acid chain: Probable alpha-galactosidase B (447 aa).

A signal peptide spans 1-22 (MTTFLSLTTAAAVLTLARGSNA). 2 disulfides stabilise this stretch: Cys-45/Cys-77 and Cys-127/Cys-157. The active-site Nucleophile is the Asp-155. 2 N-linked (GlcNAc...) asparagine glycosylation sites follow: Asn-162 and Asn-180. 225 to 229 (NWGQA) contributes to the substrate binding site. A glycan (N-linked (GlcNAc...) asparagine) is linked at Asn-236. The active-site Proton donor is the Asp-247. N-linked (GlcNAc...) asparagine glycosylation is present at Asn-286.

This sequence belongs to the glycosyl hydrolase 27 family.

The protein localises to the secreted. It carries out the reaction Hydrolysis of terminal, non-reducing alpha-D-galactose residues in alpha-D-galactosides, including galactose oligosaccharides, galactomannans and galactolipids.. Its function is as follows. Hydrolyzes a variety of simple alpha-D-galactoside as well as more complex molecules such as oligosaccharides and polysaccharides. The polypeptide is Probable alpha-galactosidase B (aglB) (Neosartorya fischeri (strain ATCC 1020 / DSM 3700 / CBS 544.65 / FGSC A1164 / JCM 1740 / NRRL 181 / WB 181) (Aspergillus fischerianus)).